The primary structure comprises 469 residues: 3-isopropylmalate dehydratase large subunit (469 aa).

[4Fe-4S] cluster-binding residues include cysteine 349, cysteine 410, and cysteine 413.

Belongs to the aconitase/IPM isomerase family. LeuC type 1 subfamily. As to quaternary structure, heterodimer of LeuC and LeuD. It depends on [4Fe-4S] cluster as a cofactor.

It carries out the reaction (2R,3S)-3-isopropylmalate = (2S)-2-isopropylmalate. Its pathway is amino-acid biosynthesis; L-leucine biosynthesis; L-leucine from 3-methyl-2-oxobutanoate: step 2/4. In terms of biological role, catalyzes the isomerization between 2-isopropylmalate and 3-isopropylmalate, via the formation of 2-isopropylmaleate. The sequence is that of 3-isopropylmalate dehydratase large subunit from Neisseria meningitidis serogroup C / serotype 2a (strain ATCC 700532 / DSM 15464 / FAM18).